The chain runs to 623 residues: MSMQIKRYPTLDLADNPIKLRLLPKESLLTLCDELRQFLLTSVSGSSGHFASGLGTVELTVALHYVYNTPFDNVIWDVGHQAYPHKILTGRRECIATIRQRNGLHPFPWREESEYDILSVGHSSTSISAGLGMAVAATYEGIGRKTVCVIGDGAMTAGMAFEALNHAGDIKSDLLVILNDNKMSISRNVGALNNHLAQILSGKLYLRINESSKKALHGMPYLKELAKRTKEQIKNIIVPNCTLFEELGFNYIGPVDGHDVQGMVHILKNMRCMKGPQLLHIITQKGRGYAPAEKDPTTWHAVPKFDPAIGQLPYQNISNYPTYSDVFGDWLCNAATSNKKLIAITPAMREGSGMAKFANQFPQQYFDVAIAEQHAVTFAAGLAISGYKPVVAIYSTFLQRAYDQVIHDVAIQKLPVLFAIDRGGVVGADGQTHQGAFDLSYLRCVPNMVIMTPSDENECRLMLHTGYHYNNGPSAVRYPRGNGIGVEYSLLRILPLGKAIVCRQGTKIAILNFGTLLTQAKKVAKTFDATLVDMRFVKPLDIELINQLAISHQALVTLEENAVIGGAGSGVNEYLMRQRLLVPVLNIGLPDYFIPQGSQEEIRAELKLDSDGIMEQIKQWLAR.

Thiamine diphosphate is bound by residues His-80 and Gly-121 to Ser-123. Mg(2+) is bound at residue Asp-152. Residues Gly-153 to Ala-154, Asn-181, Tyr-289, and Glu-372 each bind thiamine diphosphate. Position 181 (Asn-181) interacts with Mg(2+).

Belongs to the transketolase family. DXPS subfamily. As to quaternary structure, homodimer. Mg(2+) serves as cofactor. Thiamine diphosphate is required as a cofactor.

It carries out the reaction D-glyceraldehyde 3-phosphate + pyruvate + H(+) = 1-deoxy-D-xylulose 5-phosphate + CO2. The protein operates within metabolic intermediate biosynthesis; 1-deoxy-D-xylulose 5-phosphate biosynthesis; 1-deoxy-D-xylulose 5-phosphate from D-glyceraldehyde 3-phosphate and pyruvate: step 1/1. Functionally, catalyzes the acyloin condensation reaction between C atoms 2 and 3 of pyruvate and glyceraldehyde 3-phosphate to yield 1-deoxy-D-xylulose-5-phosphate (DXP). The protein is 1-deoxy-D-xylulose-5-phosphate synthase of Baumannia cicadellinicola subsp. Homalodisca coagulata.